The following is a 303-amino-acid chain: Putative ankyrin repeat protein R601 (303 aa).

ANK repeat units follow at residues 86–115 (DDNM…DVTV), 117–146 (NNFA…DITV), 147–176 (DNYF…NVDS), and 200–233 (NADV…DVSY).

The protein is Putative ankyrin repeat protein R601 of Acanthamoeba polyphaga (Amoeba).